The chain runs to 266 residues: GATA zinc finger domain-containing protein 1 (266 aa).

Residues 9–33 (CSMCKTTSSSMWKKSPQGEILCHHC) form a GATA-type zinc finger. The span at 59–72 (TTTFATTSAGPSQS) shows a compositional bias: low complexity. The segment at 59-112 (TTTFATTSAGPSQSNGGGGGKQSKQEIHRRSARLRNTKYKSAPAAEKKVSTKGK) is disordered. Lys-259 participates in a covalent cross-link: Glycyl lysine isopeptide (Lys-Gly) (interchain with G-Cter in SUMO2).

In terms of assembly, component of a chromatin complex, at least composed of KDM5A, GATAD1 and EMSY. As to expression, expressed in the eye (lens, ciliary body, retina, sclera and conjunctiva) at postnatal day 2 and 10. Not detected anywhere at postnatal day 14.

The protein resides in the nucleus. Component of some chromatin complex recruited to chromatin sites methylated 'Lys-4' of histone H3 (H3K4me), with a preference for trimethylated form (H3K4me3). In Mus musculus (Mouse), this protein is GATA zinc finger domain-containing protein 1 (Gatad1).